The following is a 227-amino-acid chain: Cytidylate kinase (227 aa).

Residue 12–20 coordinates ATP; it reads GPSGAGKGT.

It belongs to the cytidylate kinase family. Type 1 subfamily.

It is found in the cytoplasm. The enzyme catalyses CMP + ATP = CDP + ADP. It carries out the reaction dCMP + ATP = dCDP + ADP. The protein is Cytidylate kinase of Enterobacter sp. (strain 638).